Here is a 297-residue protein sequence, read N- to C-terminus: Homoserine kinase (297 aa).

82–92 (PLTRGLGSSAS) provides a ligand contact to ATP.

The protein belongs to the GHMP kinase family. Homoserine kinase subfamily.

It localises to the cytoplasm. The catalysed reaction is L-homoserine + ATP = O-phospho-L-homoserine + ADP + H(+). The protein operates within amino-acid biosynthesis; L-threonine biosynthesis; L-threonine from L-aspartate: step 4/5. Its function is as follows. Catalyzes the ATP-dependent phosphorylation of L-homoserine to L-homoserine phosphate. The chain is Homoserine kinase from Bacillus mycoides (strain KBAB4) (Bacillus weihenstephanensis).